Here is a 375-residue protein sequence, read N- to C-terminus: Probable butyrate kinase 2 (375 aa).

Belongs to the acetokinase family.

It localises to the cytoplasm. The catalysed reaction is butanoate + ATP = butanoyl phosphate + ADP. The protein is Probable butyrate kinase 2 of Thermotoga maritima (strain ATCC 43589 / DSM 3109 / JCM 10099 / NBRC 100826 / MSB8).